A 121-amino-acid chain; its full sequence is Parathyroid hormone-related protein (121 aa).

An N-terminal signal peptide occupies residues 1 to 14 (VGVFLLSYSVPSCG). The propeptide occupies 15-24 (RSVEELGRRL). The segment at 47 to 58 (RFFLHHLIAEIH) is important for receptor binding. The segment at 61-121 (EIRATSEVSP…PGKKKKGKPG (61 aa)) is disordered. Residues 66-80 (SEVSPNSKPAPNTKN) show a composition bias toward polar residues. A Nuclear localization signal motif is present at residues 98 to 119 (TNKVETYKEQPLKTPGKKKKGK). Over residues 99–108 (NKVETYKEQP) the composition is skewed to basic and acidic residues. The segment covering 112–121 (PGKKKKGKPG) has biased composition (basic residues).

It belongs to the parathyroid hormone family. In terms of assembly, PTHrP interacts with PTH1R (via N-terminal extracellular domain).

The protein localises to the secreted. It is found in the cytoplasm. The protein resides in the nucleus. Neuroendocrine peptide which is a critical regulator of cellular and organ growth, development, migration, differentiation and survival and of epithelial calcium ion transport. Acts by binding to its receptor, PTH1R, activating G protein-coupled receptor signaling. Regulates endochondral bone development and epithelial-mesenchymal interactions during the formation of the mammary glands and teeth. Required for skeletal homeostasis. Promotes mammary mesenchyme differentiation and bud outgrowth by modulating mesenchymal cell responsiveness to BMPs. Up-regulates BMPR1A expression in the mammary mesenchyme and this increases the sensitivity of these cells to BMPs and allows them to respond to BMP4 in a paracrine and/or autocrine fashion. BMP4 signaling in the mesenchyme, in turn, triggers epithelial outgrowth and augments MSX2 expression, which causes the mammary mesenchyme to inhibit hair follicle formation within the nipple sheath. The polypeptide is Parathyroid hormone-related protein (PTHLH) (Ovis aries (Sheep)).